Here is a 333-residue protein sequence, read N- to C-terminus: NADH-quinone oxidoreductase subunit H (333 aa).

Helical transmembrane passes span F15–Y35, F88–F108, I117–T137, I159–L179, V191–E211, W239–V259, I274–V296, and V313–F333.

This sequence belongs to the complex I subunit 1 family. NDH-1 is composed of 14 different subunits. Subunits NuoA, H, J, K, L, M, N constitute the membrane sector of the complex.

Its subcellular location is the cell membrane. It carries out the reaction a quinone + NADH + 5 H(+)(in) = a quinol + NAD(+) + 4 H(+)(out). Functionally, NDH-1 shuttles electrons from NADH, via FMN and iron-sulfur (Fe-S) centers, to quinones in the respiratory chain. The immediate electron acceptor for the enzyme in this species is believed to be ubiquinone. Couples the redox reaction to proton translocation (for every two electrons transferred, four hydrogen ions are translocated across the cytoplasmic membrane), and thus conserves the redox energy in a proton gradient. This subunit may bind ubiquinone. This chain is NADH-quinone oxidoreductase subunit H, found in Bacillus cereus (strain G9842).